A 221-amino-acid polypeptide reads, in one-letter code: DVVIKAQVLAGGRIVFSPEEAKLITKQTGAKGRICNQVLVCERREYYFAITMERSFQGPVLIGSAQGGVNIEDVAAENPEAIVKKMGFPSNIVDSAAENMIKLYNLFLKINFDSNSAYRQKIFDLQDWSQEDERLHGGTPANFLDVGGGATVQQVTEAFKVQAILVNIFGGIMRLQGTRVDDAKILACDDLDEAAKMVVKLSEIVTLAKEAHVDVKFQLPI.

The ATP-grasp domain maps to 1–122 (DVVIKAQVLA…DSNSAYRQKI (122 aa)). Residue K5 participates in ATP binding. N6-acetyllysine is present on residues K22 and K26. The residue at position 114 (S114) is a Phosphoserine. The residue at position 139 (T139) is a Phosphothreonine. Residue 171-173 (GIM) coordinates substrate. N6-acetyllysine is present on K196.

The protein belongs to the succinate/malate CoA ligase beta subunit family. ATP-specific subunit beta subfamily. Heterodimer of an alpha and a beta subunit. The beta subunit determines specificity for ATP. Interacts with ALAS2.

It localises to the mitochondrion. The catalysed reaction is succinate + ATP + CoA = succinyl-CoA + ADP + phosphate. Its pathway is carbohydrate metabolism; tricarboxylic acid cycle; succinate from succinyl-CoA (ligase route): step 1/1. Its function is as follows. ATP-specific succinyl-CoA synthetase functions in the citric acid cycle (TCA), coupling the hydrolysis of succinyl-CoA to the synthesis of ATP and thus represents the only step of substrate-level phosphorylation in the TCA. The beta subunit provides nucleotide specificity of the enzyme and binds the substrate succinate, while the binding sites for coenzyme A and phosphate are found in the alpha subunit. This is Succinate--CoA ligase [ADP-forming] subunit beta, mitochondrial from Mesocricetus auratus (Golden hamster).